A 448-amino-acid polypeptide reads, in one-letter code: uncharacterized protein (448 aa).

As to expression, component of the acid-insoluble and acid-soluble organic matrix of the aragonitic skeleton (at protein level).

It localises to the secreted. This is an uncharacterized protein from Acropora millepora (Staghorn coral).